Here is a 1462-residue protein sequence, read N- to C-terminus: Protein peg1 (1462 aa).

2 disordered regions span residues 528-563 (SFSK…SRER) and 573-592 (FHST…SIAI). Composition is skewed to low complexity over residues 538–552 (SSNS…RLGL) and 574–589 (HSTS…HSPS). Ser599 carries the post-translational modification Phosphoserine. Positions 838–928 (SSTHQEHLSK…NCSEESLDDH (91 aa)) are disordered. The span at 847–866 (KNLPTLNTSSSSNSSQTDLL) shows a compositional bias: low complexity. Residues 870-896 (GKGETKETEMQSPIESKEGLLSKDTHI) are compositionally biased toward basic and acidic residues. Ser1221 bears the Phosphoserine mark. Residues 1342 to 1367 (TLIAEIADLQGLYEFTQQRLQSLNTE) are a coiled coil.

The protein belongs to the CLASP family. In terms of assembly, interacts with microtubules. Interacts with dhc1, mal3 and tea1.

Its subcellular location is the cytoplasm. It is found in the cytoskeleton. It localises to the spindle. The protein localises to the microtubule organizing center. The protein resides in the spindle pole body. Functionally, microtubule binding protein that regulates the stability of dynamic microtubules. Required for mitotic spindle formation. This chain is Protein peg1 (peg1), found in Schizosaccharomyces pombe (strain 972 / ATCC 24843) (Fission yeast).